The following is a 740-amino-acid chain: NAD(P)H-quinone oxidoreductase subunit 5, chloroplastic (740 aa).

16 helical membrane-spanning segments follow: residues 9-29 (WIIP…LFLF), 40-60 (WAFQ…YLSI), 89-109 (IDPL…MVLI), 125-145 (FAYM…SNLI), 147-167 (IYIF…FWFT), 185-205 (GDFG…SFEF), 219-239 (NEVD…GAVA), 258-278 (TPIS…FLVA), 286-306 (VIPY…LLGA), 327-347 (LGYM…FHLI), 354-374 (ALLF…VGYS), 396-416 (ITFL…CFWS), 425-445 (WLYS…TAFY), 543-563 (LFPI…GIPF), 602-622 (VLSV…YKPI), and 717-737 (SYLF…YLLF).

It belongs to the complex I subunit 5 family. NDH is composed of at least 16 different subunits, 5 of which are encoded in the nucleus.

It is found in the plastid. The protein localises to the chloroplast thylakoid membrane. The enzyme catalyses a plastoquinone + NADH + (n+1) H(+)(in) = a plastoquinol + NAD(+) + n H(+)(out). The catalysed reaction is a plastoquinone + NADPH + (n+1) H(+)(in) = a plastoquinol + NADP(+) + n H(+)(out). Its function is as follows. NDH shuttles electrons from NAD(P)H:plastoquinone, via FMN and iron-sulfur (Fe-S) centers, to quinones in the photosynthetic chain and possibly in a chloroplast respiratory chain. The immediate electron acceptor for the enzyme in this species is believed to be plastoquinone. Couples the redox reaction to proton translocation, and thus conserves the redox energy in a proton gradient. This is NAD(P)H-quinone oxidoreductase subunit 5, chloroplastic (ndhF) from Nicotiana sylvestris (Wood tobacco).